The following is a 435-amino-acid chain: Diguanylate cyclase TpbB (435 aa).

Topologically, residues 1–22 (MNRRRRYTGSNPSLRRVLYRAH) are cytoplasmic. Residues 23 to 43 (LGVALVAVFTAGLAVTLVGLL) form a helical membrane-spanning segment. Topologically, residues 44 to 154 (TLRAYADPNQ…VKGSGGSLLR (111 aa)) are periplasmic. A helical membrane pass occupies residues 155-175 (FLLTGFAGMVLCLLLTALGAF). Topologically, residues 176 to 435 (YLSRRLVRGI…DSATPEAPPK (260 aa)) are cytoplasmic. In terms of domain architecture, HAMP spans 183–236 (RGIVGPLDQLAKVAHTVRRERDFEKRVPEAGIAELSQLGEDFNALLDELESWQA). A GGDEF domain is found at 279–415 (EQLAVLFIDS…GSRRLAELND (137 aa)). Residues Ser-288 and Asp-330 each contribute to the Mg(2+) site. Asp-330 serves as the catalytic Proton acceptor. Residues 413–426 (LNDPRILQEEKEID) show a composition bias toward basic and acidic residues. Positions 413–435 (LNDPRILQEEKEIDSATPEAPPK) are disordered.

In terms of assembly, homodimer. Interacts with YfiR. The cofactor is Mg(2+). Phosphorylated at both Tyr residues and Ser/Thr residues. Dephosphorylated and inactivated by TpbA.

Its subcellular location is the cell inner membrane. It carries out the reaction 2 GTP = 3',3'-c-di-GMP + 2 diphosphate. It functions in the pathway purine metabolism; 3',5'-cyclic di-GMP biosynthesis. Activity is tightly controlled by YfiR, a small periplasmic protein, and the OmpA/Pal-like outer-membrane lipoprotein YfiB. Diguanylate cyclase activity is inhibited by the specific interaction of YfiR with the TpbB periplasmic domain and is activated by YfiB, which releases the YfiR-mediated repression through sequestration of YfiR to the outer membrane. Release of repression leads to a conformational shift in TpbB/YfiN that propagates through the PAS and transmembrane domains to switch the cytoplasmic HAMP domain from an inactive to an active conformation and activate the C-terminal catalytic GGDEF domain. Thus, TpbB/YfiN appears to function by switching between discrete inactive and active functional states depending on the presence or absence of bound YfiR. Activity is also controlled by dephosphorylation of the periplasmic domain by the tyrosine phosphatase TpbA. These two mechanisms of regulation could in principle work in parallel or as part of the same regulatory pathway. Does not undergo product feedback inhibition. In terms of biological role, catalyzes the synthesis of cyclic-di-GMP (c-di-GMP) via the condensation of 2 GTP molecules. Functionally, part of the YfiB-TpbB-YfiR (or yfiBNR) system, encoding a tripartite signaling module that modulates intracellular c-di-GMP levels. The system is a key regulator of the small colony variant (SCV) phenotype, and plays an important role in biofilm formation and in vivo persistence. The c-di-GMP produced by TpbB/YfiN stimulates the production of the Pel and Psl exopolysaccharides, which promotes surface attachment, generates an SCV phenotype and confers resistance against phagocytosis. This Pseudomonas aeruginosa (strain ATCC 15692 / DSM 22644 / CIP 104116 / JCM 14847 / LMG 12228 / 1C / PRS 101 / PAO1) protein is Diguanylate cyclase TpbB.